A 185-amino-acid chain; its full sequence is Adenine phosphoribosyltransferase (185 aa).

The protein belongs to the purine/pyrimidine phosphoribosyltransferase family. Homodimer.

The protein localises to the cytoplasm. It carries out the reaction AMP + diphosphate = 5-phospho-alpha-D-ribose 1-diphosphate + adenine. Its pathway is purine metabolism; AMP biosynthesis via salvage pathway; AMP from adenine: step 1/1. Its function is as follows. Catalyzes a salvage reaction resulting in the formation of AMP, that is energically less costly than de novo synthesis. The protein is Adenine phosphoribosyltransferase of Aliarcobacter butzleri (strain RM4018) (Arcobacter butzleri).